A 265-amino-acid polypeptide reads, in one-letter code: AT-hook motif nuclear-localized protein 18 (265 aa).

Residues 1–75 form a disordered region; it reads MDEVSRSHTP…AGSKNKPKAP (75 aa). Over residues 19-30 the composition is skewed to basic residues; it reads HYHHQNAGRQKR. The segment at residues 59–71 is a DNA-binding region (a.T hook); it reads RRPRGRPAGSKNK. Positions 83-217 constitute a PPC domain; it reads ANAFRCHVME…EEEETEREID (135 aa).

The protein resides in the nucleus. In terms of biological role, transcription factor that specifically binds AT-rich DNA sequences related to the nuclear matrix attachment regions (MARs). Acts redundantly with AHL22, AHL27 and AHL29 in the regulation of flowering and regulation of the hypocotyl elongation. The sequence is that of AT-hook motif nuclear-localized protein 18 from Arabidopsis thaliana (Mouse-ear cress).